A 305-amino-acid chain; its full sequence is N-acetylmuramic acid 6-phosphate etherase (305 aa).

The region spanning 59 to 222 (TSKALGKGGR…STGVMVKLGK (164 aa)) is the SIS domain. Glu-87 serves as the catalytic Proton donor. The active site involves Glu-118.

Belongs to the GCKR-like family. MurNAc-6-P etherase subfamily. Homodimer.

The enzyme catalyses N-acetyl-D-muramate 6-phosphate + H2O = N-acetyl-D-glucosamine 6-phosphate + (R)-lactate. The protein operates within amino-sugar metabolism; N-acetylmuramate degradation. In terms of biological role, specifically catalyzes the cleavage of the D-lactyl ether substituent of MurNAc 6-phosphate, producing GlcNAc 6-phosphate and D-lactate. The chain is N-acetylmuramic acid 6-phosphate etherase from Crocosphaera subtropica (strain ATCC 51142 / BH68) (Cyanothece sp. (strain ATCC 51142)).